Consider the following 416-residue polypeptide: Formyl-CoA:oxalate CoA-transferase (416 aa).

CoA contacts are provided by residues 17-18 (QS), R38, 72-75 (LNTK), 96-98 (NFH), H104, and 137-140 (KAYE). D169 serves as the catalytic Nucleophile. Residue 248 to 250 (GGQ) participates in substrate binding. Residue 273–275 (QEQ) coordinates CoA.

Belongs to the CoA-transferase III family. Frc subfamily. As to quaternary structure, homodimer.

It carries out the reaction formyl-CoA + oxalate = oxalyl-CoA + formate. It functions in the pathway metabolic intermediate degradation; oxalate degradation; CO(2) and formate from oxalate: step 1/2. In terms of biological role, involved in the catabolism of oxalate and in the adapatation to low pH via the induction of the oxalate-dependent acid tolerance response (ATR). Catalyzes the transfer of the CoA moiety from formyl-CoA to oxalate. The sequence is that of Formyl-CoA:oxalate CoA-transferase from Shigella sonnei (strain Ss046).